The following is a 941-amino-acid chain: UvrABC system protein A (941 aa).

Residue G31 to S38 coordinates ATP. Residues C253–C280 form a C4-type zinc finger. ABC transporter domains lie at W310–L587 and A607–K937. G640 to S647 is an ATP binding site. Residues C740 to C766 form a C4-type zinc finger.

This sequence belongs to the ABC transporter superfamily. UvrA family. In terms of assembly, forms a heterotetramer with UvrB during the search for lesions.

The protein resides in the cytoplasm. Its function is as follows. The UvrABC repair system catalyzes the recognition and processing of DNA lesions. UvrA is an ATPase and a DNA-binding protein. A damage recognition complex composed of 2 UvrA and 2 UvrB subunits scans DNA for abnormalities. When the presence of a lesion has been verified by UvrB, the UvrA molecules dissociate. The chain is UvrABC system protein A from Salmonella typhi.